The primary structure comprises 80 residues: 17 kDa surface antigen (80 aa).

The segment covering 47 to 58 has biased composition (polar residues); sequence ALETTPSGTSIE. The tract at residues 47–80 is disordered; the sequence is ALETTPSGTSIEWRNPDNGNYGYVTPSKTYKNST.

It belongs to the rickettsiale 17 kDa surface antigen family.

It localises to the cell outer membrane. This is 17 kDa surface antigen (omp) from Rickettsia canadensis.